Here is a 571-residue protein sequence, read N- to C-terminus: Septation ring formation regulator EzrA (571 aa).

Residues 1–3 lie on the Extracellular side of the membrane; it reads MYY. The helical transmembrane segment at 4–22 threads the bilayer; it reads MLIGFIIVVIAIISAGYIL. Residues 23 to 571 are Cytoplasmic-facing; it reads KRKHYQRINE…ESKVSVDDIE (549 aa). 5 coiled-coil regions span residues 169–214, 249–298, 326–374, 400–438, and 474–529; these read VETK…AQME, AQME…DTLE, DALA…ASGE, KFAE…RERL, and TQDW…ENHF.

This sequence belongs to the EzrA family.

It localises to the cell membrane. Its function is as follows. Negative regulator of FtsZ ring formation; modulates the frequency and position of FtsZ ring formation. Inhibits FtsZ ring formation at polar sites. Interacts either with FtsZ or with one of its binding partners to promote depolymerization. This chain is Septation ring formation regulator EzrA, found in Listeria welshimeri serovar 6b (strain ATCC 35897 / DSM 20650 / CCUG 15529 / CIP 8149 / NCTC 11857 / SLCC 5334 / V8).